Consider the following 79-residue polypeptide: Sec-independent protein translocase protein TatA (79 aa).

The chain crosses the membrane as a helical span at residues 1 to 21 (MGGISIWQLLIIALIVILLFG). The tract at residues 42 to 79 (AMTSETSEEEKKALEDSQTAQTSQQAEKKPESKDKEQA) is disordered. The span at 57 to 66 (DSQTAQTSQQ) shows a compositional bias: polar residues. Basic and acidic residues predominate over residues 67 to 79 (AEKKPESKDKEQA).

Belongs to the TatA/E family. The Tat system comprises two distinct complexes: a TatABC complex, containing multiple copies of TatA, TatB and TatC subunits, and a separate TatA complex, containing only TatA subunits. Substrates initially bind to the TatABC complex, which probably triggers association of the separate TatA complex to form the active translocon.

The protein localises to the cell inner membrane. Functionally, part of the twin-arginine translocation (Tat) system that transports large folded proteins containing a characteristic twin-arginine motif in their signal peptide across membranes. TatA could form the protein-conducting channel of the Tat system. This Shewanella denitrificans (strain OS217 / ATCC BAA-1090 / DSM 15013) protein is Sec-independent protein translocase protein TatA.